The sequence spans 322 residues: Myeloid-associated differentiation marker (322 aa).

The tract at residues 1-25 (MPVTVTRTTITTTTTSSSGQGSPTI) is disordered. S22 is subject to Phosphoserine. 2 consecutive MARVEL domains span residues 31 to 163 (ALTQ…ARPG) and 168 to 319 (YMAT…HLVF). Helical transmembrane passes span 41 to 61 (LLQL…GAWT), 70 to 90 (FTWC…LCGL), 101 to 121 (FPIT…IIYP), 137 to 157 (AIAA…EVAW), 171 to 191 (TVPG…FAFI), 203 to 223 (LEWC…AILL), 239 to 259 (FLSG…VLWP), and 294 to 314 (LAVA…LVHS).

This sequence belongs to the MAL family.

It localises to the membrane. The chain is Myeloid-associated differentiation marker (MYADM) from Pongo abelii (Sumatran orangutan).